We begin with the raw amino-acid sequence, 61 residues long: Large ribosomal subunit protein uL30 (61 aa).

Belongs to the universal ribosomal protein uL30 family. In terms of assembly, part of the 50S ribosomal subunit.

The protein is Large ribosomal subunit protein uL30 of Chlorobium phaeovibrioides (strain DSM 265 / 1930) (Prosthecochloris vibrioformis (strain DSM 265)).